A 130-amino-acid chain; its full sequence is Small ribosomal subunit protein uS11 (130 aa).

Belongs to the universal ribosomal protein uS11 family. Part of the 30S ribosomal subunit. Interacts with proteins S7 and S18. Binds to IF-3.

Its function is as follows. Located on the platform of the 30S subunit, it bridges several disparate RNA helices of the 16S rRNA. Forms part of the Shine-Dalgarno cleft in the 70S ribosome. The sequence is that of Small ribosomal subunit protein uS11 from Shewanella frigidimarina (strain NCIMB 400).